A 577-amino-acid chain; its full sequence is Laccase-17 (577 aa).

The N-terminal stretch at 1 to 22 (MALQLLLAVFSCVLLLPQPAFG) is a signal peptide. Plastocyanin-like domains follow at residues 30 to 146 (EIKM…PKRG) and 156 to 309 (KEVP…YEPP). Residues N35 and N76 are each glycosylated (N-linked (GlcNAc...) asparagine). H80 and H82 together coordinate Cu cation. N112 carries an N-linked (GlcNAc...) asparagine glycan. The Cu cation site is built by H125 and H127. Residues N185, N201, N237, N297, N335, N383, N391, N401, N437, N444, N450, and N460 are each glycosylated (N-linked (GlcNAc...) asparagine). The Plastocyanin-like 3 domain occupies 427 to 561 (KFPWSPIVPF…RMAWLVLDGD (135 aa)). H478, H481, H483, H540, C541, H542, and H546 together coordinate Cu cation.

Belongs to the multicopper oxidase family. Cu cation is required as a cofactor. As to expression, ubiquitous with higher levels in the inflorescence stem.

The protein resides in the secreted. Its subcellular location is the extracellular space. It is found in the apoplast. It carries out the reaction 4 hydroquinone + O2 = 4 benzosemiquinone + 2 H2O. In terms of biological role, lignin degradation and detoxification of lignin-derived products. In Arabidopsis thaliana (Mouse-ear cress), this protein is Laccase-17 (LAC17).